A 367-amino-acid polypeptide reads, in one-letter code: NAD(P)H-quinone oxidoreductase subunit 1, chloroplastic (367 aa).

Transmembrane regions (helical) follow at residues 29-49, 96-116, 128-148, 176-196, 204-224, 266-286, 304-324, and 347-367; these read WIPLPILLLIILAVVGVLVVV, VLLFTLGPAIVVIPIFLSYLI, INLGIFFWITVSSVAPLGLLM, LALCVLSICLLSDSLSTIDIV, ILGWNIWRQPIGFIAFIIAAL, LVSALFASVLYLGGWSLPIPI, VISAFLGIGMTLLKTYLFLFL, and FLLPISLGNLLLTASLKIALL.

Belongs to the complex I subunit 1 family. In terms of assembly, NDH is composed of at least 16 different subunits, 5 of which are encoded in the nucleus.

It is found in the plastid. It localises to the chloroplast thylakoid membrane. It carries out the reaction a plastoquinone + NADH + (n+1) H(+)(in) = a plastoquinol + NAD(+) + n H(+)(out). The enzyme catalyses a plastoquinone + NADPH + (n+1) H(+)(in) = a plastoquinol + NADP(+) + n H(+)(out). Its function is as follows. NDH shuttles electrons from NAD(P)H:plastoquinone, via FMN and iron-sulfur (Fe-S) centers, to quinones in the photosynthetic chain and possibly in a chloroplast respiratory chain. The immediate electron acceptor for the enzyme in this species is believed to be plastoquinone. Couples the redox reaction to proton translocation, and thus conserves the redox energy in a proton gradient. The sequence is that of NAD(P)H-quinone oxidoreductase subunit 1, chloroplastic from Mesostigma viride (Green alga).